The chain runs to 491 residues: Protein phosphatase ppm-1.G (491 aa).

The PPM-type phosphatase domain maps to 23-486 (SYACTTMQGW…DNMTVICTTF (464 aa)). Mn(2+)-binding residues include aspartate 57 and glycine 58. Over residues 112–125 (KDIGDEGKPKKAGG) the composition is skewed to basic and acidic residues. Disordered regions lie at residues 112–136 (KDIG…ADRI) and 170–294 (GDVS…EEMV). 2 stretches are compositionally biased toward acidic residues: residues 173–192 (SDDS…QDDT) and 260–294 (ATEE…EEMV). Mn(2+) is bound by residues aspartate 428 and aspartate 477.

The protein belongs to the PP2C family. The cofactor is Mg(2+). It depends on Mn(2+) as a cofactor.

It carries out the reaction O-phospho-L-seryl-[protein] + H2O = L-seryl-[protein] + phosphate. The catalysed reaction is O-phospho-L-threonyl-[protein] + H2O = L-threonyl-[protein] + phosphate. This chain is Protein phosphatase ppm-1.G, found in Caenorhabditis elegans.